The chain runs to 678 residues: DNA ligase (678 aa).

Residues 47–51, 96–97, and E122 each bind NAD(+); these read DSDYD and SL. The active-site N6-AMP-lysine intermediate is K124. Positions 145, 182, 300, and 324 each coordinate NAD(+). C418, C421, C436, and C442 together coordinate Zn(2+). The 77-residue stretch at 602-678 folds into the BRCT domain; sequence AHNESFTNKT…IFEEDLQNLL (77 aa).

The protein belongs to the NAD-dependent DNA ligase family. LigA subfamily. Mg(2+) serves as cofactor. Requires Mn(2+) as cofactor.

It carries out the reaction NAD(+) + (deoxyribonucleotide)n-3'-hydroxyl + 5'-phospho-(deoxyribonucleotide)m = (deoxyribonucleotide)n+m + AMP + beta-nicotinamide D-nucleotide.. Functionally, DNA ligase that catalyzes the formation of phosphodiester linkages between 5'-phosphoryl and 3'-hydroxyl groups in double-stranded DNA using NAD as a coenzyme and as the energy source for the reaction. It is essential for DNA replication and repair of damaged DNA. The chain is DNA ligase from Francisella philomiragia subsp. philomiragia (strain ATCC 25017 / CCUG 19701 / FSC 153 / O#319-036).